We begin with the raw amino-acid sequence, 249 residues long: Seipin homolog (249 aa).

The Cytoplasmic portion of the chain corresponds to 1–10 (MGYLVKLFKL). Residues 11 to 31 (VVWMLVIGLFSIPSLVSYVIF) form a helical membrane-spanning segment. At 32 to 212 (YDTVIPHSVI…GMRWFMYTHK (181 aa)) the chain is on the lumenal side. A helical membrane pass occupies residues 213 to 233 (VSAFLVFTSLFWFTGITSTII). Topologically, residues 234–249 (TYLIVSSTSETKATRR) are cytoplasmic.

The protein belongs to the seipin family.

It localises to the endoplasmic reticulum membrane. In terms of biological role, involved in lipid metabolism and lipid droplet (LD) morphology, number, and size. Facilitates initiation of LD formation, and ensures that vectorial budding of LDs from the ER is directed towards the cytoplasm. This is Seipin homolog from Schizosaccharomyces pombe (strain 972 / ATCC 24843) (Fission yeast).